A 176-amino-acid chain; its full sequence is Late lactation protein A (176 aa).

The signal sequence occupies residues 1 to 18 (MRVLFLTISLSLFSIIHA). Cysteines 78 and 171 form a disulfide.

Belongs to the calycin superfamily. Lipocalin family. As to expression, mammary gland specific. Secreted in milk.

It is found in the secreted. In terms of biological role, probably serves a role in the transport of a small ligand released during the hydrolysis of milk fat. This is Late lactation protein A (LLPA) from Notamacropus eugenii (Tammar wallaby).